We begin with the raw amino-acid sequence, 123 residues long: Small ribosomal subunit protein uS13 (123 aa).

Positions 97–123 are disordered; that stretch reads PVRGQRTHTNAKTRKGRSKLPVAAKKK.

The protein belongs to the universal ribosomal protein uS13 family. As to quaternary structure, part of the 30S ribosomal subunit. Forms a loose heterodimer with protein S19. Forms two bridges to the 50S subunit in the 70S ribosome.

Functionally, located at the top of the head of the 30S subunit, it contacts several helices of the 16S rRNA. In the 70S ribosome it contacts the 23S rRNA (bridge B1a) and protein L5 of the 50S subunit (bridge B1b), connecting the 2 subunits; these bridges are implicated in subunit movement. Contacts the tRNAs in the A and P-sites. In Ehrlichia chaffeensis (strain ATCC CRL-10679 / Arkansas), this protein is Small ribosomal subunit protein uS13.